The chain runs to 354 residues: GTPase Obg (354 aa).

The 159-residue stretch at 1–159 (MKFVDEVKIH…RDLVLELKLL (159 aa)) folds into the Obg domain. Positions 160–333 (ADVGIVGYPN…LLDAVGRALF (174 aa)) constitute an OBG-type G domain. Residues 166–173 (GYPNAGKS), 191–195 (FTTLT), 212–215 (DIPG), 283–286 (TKID), and 314–316 (SAV) each bind GTP. Residues S173 and T193 each coordinate Mg(2+).

The protein belongs to the TRAFAC class OBG-HflX-like GTPase superfamily. OBG GTPase family. In terms of assembly, monomer. It depends on Mg(2+) as a cofactor.

Its subcellular location is the cytoplasm. Its function is as follows. An essential GTPase which binds GTP, GDP and possibly (p)ppGpp with moderate affinity, with high nucleotide exchange rates and a fairly low GTP hydrolysis rate. Plays a role in control of the cell cycle, stress response, ribosome biogenesis and in those bacteria that undergo differentiation, in morphogenesis control. The protein is GTPase Obg of Anaeromyxobacter dehalogenans (strain 2CP-1 / ATCC BAA-258).